A 1155-amino-acid polypeptide reads, in one-letter code: Cilia- and flagella-associated protein 251 (1155 aa).

Basic and acidic residues-rich tracts occupy residues 1 to 19 (MSDA…GETE) and 31 to 59 (KEVE…KTGE). 2 disordered regions span residues 1–144 (MSDA…KLSL) and 167–225 (LDQI…DIQS). Acidic residues predominate over residues 60–69 (EEGEEEEEKE). The span at 70–95 (EEGKKDKKIVMEETEEKAGESQEKEA) shows a compositional bias: basic and acidic residues. The span at 99–111 (QEETTVEPQEVTE) shows a compositional bias: low complexity. Polar residues-rich tracts occupy residues 118-128 (TQITDSQSVTS) and 172-182 (PEEQQISSPER). The span at 201 to 220 (GQERRDLEPENREEGQERTV) shows a compositional bias: basic and acidic residues. 14 WD repeats span residues 341 to 383 (PVHT…IWKW), 391 to 431 (ACTL…AWYE), 442 to 481 (LLTE…VWDI), 499 to 534 (PCKL…FYDH), 537 to 597 (SIVN…VYHL), 601 to 641 (GTKL…VWNY), 647 to 684 (LFSR…ILDA), 694 to 730 (PFKY…MLVV), 737 to 780 (WEYL…GYDL), 791 to 831 (LDIH…LFNA), 837 to 883 (RKTL…ILPV), 889 to 927 (KTSA…QWKI), 965 to 1005 (YFYY…FYPS), and 1025 to 1065 (GKLI…GYTN).

The protein resides in the cytoplasm. It localises to the cytoskeleton. The protein localises to the cilium axoneme. It is found in the cell projection. Its subcellular location is the cilium. The protein resides in the flagellum. Involved in spermatozoa motility. May also regulate cilium motility through its role in the assembly of the axonemal radial spokes. In Pongo abelii (Sumatran orangutan), this protein is Cilia- and flagella-associated protein 251.